Here is a 271-residue protein sequence, read N- to C-terminus: Peroxiredoxin-4 (271 aa).

The signal sequence occupies residues 1 to 37 (MEALPLLAATTPDHGRHRRLLLLPLLLFLLPAGAVQG). Residues 79–237 (AKISKPAPYW…TLRLVQAFQY (159 aa)) form the Thioredoxin domain. Cys-124 acts as the Cysteine sulfenic acid (-SOH) intermediate in catalysis.

It belongs to the peroxiredoxin family. AhpC/Prx1 subfamily. As to quaternary structure, homodimer; disulfide-linked, upon oxidation. 5 homodimers assemble to form a ring-like decamer. Can form heterodimers with PRDX1. In terms of processing, the enzyme can be inactivated by further oxidation of the cysteine sulfenic acid (C(P)-SOH) to sulphinic acid (C(P)-SO2H) and sulphonic acid (C(P)-SO3H) instead of its condensation to a disulfide bond.

The protein resides in the cytoplasm. It is found in the endoplasmic reticulum. The catalysed reaction is a hydroperoxide + [thioredoxin]-dithiol = an alcohol + [thioredoxin]-disulfide + H2O. Thiol-specific peroxidase that catalyzes the reduction of hydrogen peroxide and organic hydroperoxides to water and alcohols, respectively. Plays a role in cell protection against oxidative stress by detoxifying peroxides and as sensor of hydrogen peroxide-mediated signaling events. Regulates the activation of NF-kappa-B in the cytosol by a modulation of I-kappa-B-alpha phosphorylation. In Homo sapiens (Human), this protein is Peroxiredoxin-4 (PRDX4).